We begin with the raw amino-acid sequence, 435 residues long: Xylose isomerase (435 aa).

Active-site residues include histidine 100 and aspartate 103. The Mg(2+) site is built by glutamate 231, glutamate 267, histidine 270, aspartate 295, aspartate 306, aspartate 308, and aspartate 338.

This sequence belongs to the xylose isomerase family. Homotetramer. Mg(2+) is required as a cofactor.

It is found in the cytoplasm. The enzyme catalyses alpha-D-xylose = alpha-D-xylulofuranose. This is Xylose isomerase from Brucella canis (strain ATCC 23365 / NCTC 10854 / RM-666).